A 201-amino-acid chain; its full sequence is Holliday junction branch migration complex subunit RuvA (201 aa).

The tract at residues 1–64 (MIGRLRGTLA…EDAHLLYGFA (64 aa)) is domain I. The interval 65-143 (EKRERELFRE…AWENMPTIAP (79 aa)) is domain II. A flexible linker region spans residues 144–152 (LVMEPRASA). The interval 153-201 (TVSSAEADAVSALIALGFKPQEASRAVAAVPGEDLSSEEMIRQALKGMV) is domain III.

Belongs to the RuvA family. Homotetramer. Forms an RuvA(8)-RuvB(12)-Holliday junction (HJ) complex. HJ DNA is sandwiched between 2 RuvA tetramers; dsDNA enters through RuvA and exits via RuvB. An RuvB hexamer assembles on each DNA strand where it exits the tetramer. Each RuvB hexamer is contacted by two RuvA subunits (via domain III) on 2 adjacent RuvB subunits; this complex drives branch migration. In the full resolvosome a probable DNA-RuvA(4)-RuvB(12)-RuvC(2) complex forms which resolves the HJ.

The protein resides in the cytoplasm. Its function is as follows. The RuvA-RuvB-RuvC complex processes Holliday junction (HJ) DNA during genetic recombination and DNA repair, while the RuvA-RuvB complex plays an important role in the rescue of blocked DNA replication forks via replication fork reversal (RFR). RuvA specifically binds to HJ cruciform DNA, conferring on it an open structure. The RuvB hexamer acts as an ATP-dependent pump, pulling dsDNA into and through the RuvAB complex. HJ branch migration allows RuvC to scan DNA until it finds its consensus sequence, where it cleaves and resolves the cruciform DNA. This Pseudomonas aeruginosa (strain LESB58) protein is Holliday junction branch migration complex subunit RuvA.